The primary structure comprises 111 residues: Probable 4-amino-4-deoxy-L-arabinose-phosphoundecaprenol flippase subunit ArnE (111 aa).

The Cytoplasmic portion of the chain corresponds to 1-35; it reads MIWLTLVFASLLSVAGQLCQKQATCFVAINKRRKH. A helical membrane pass occupies residues 36–56; the sequence is IVLWLGLALACLGLAMVLWLL. In terms of domain architecture, EamA spans 40–109; it reads LGLALACLGL…IIGGIVILGS (70 aa). Residues 57-60 are Periplasmic-facing; the sequence is VLQN. The helical transmembrane segment at 61-81 threads the bilayer; that stretch reads VPVGIAYPMLSLNFVWVTLAA. Residues 82–87 lie on the Cytoplasmic side of the membrane; the sequence is VKLWHE. The helical transmembrane segment at 88–108 threads the bilayer; the sequence is PVSPRHWCGVAFIIGGIVILG. Residues 109–111 are Periplasmic-facing; it reads STV.

Belongs to the ArnE family. In terms of assembly, heterodimer of ArnE and ArnF.

Its subcellular location is the cell inner membrane. It participates in bacterial outer membrane biogenesis; lipopolysaccharide biosynthesis. Functionally, translocates 4-amino-4-deoxy-L-arabinose-phosphoundecaprenol (alpha-L-Ara4N-phosphoundecaprenol) from the cytoplasmic to the periplasmic side of the inner membrane. The sequence is that of Probable 4-amino-4-deoxy-L-arabinose-phosphoundecaprenol flippase subunit ArnE from Escherichia coli (strain ATCC 8739 / DSM 1576 / NBRC 3972 / NCIMB 8545 / WDCM 00012 / Crooks).